Consider the following 90-residue polypeptide: Inner kinetochore subunit MHF1 (90 aa).

The protein belongs to the TAF9 family. CENP-S/MHF1 subfamily. In terms of assembly, the MHF histone-fold complex is a heterotetramer of 2 MHF1-MHF2 heterodimers. Together with MPH1/FANCM, forms the FANCM-MHF complex. Component of the inner kinetochore constitutive centromere-associated network (CCAN) (also known as central kinetochore CTF19 complex in yeast), which is composed of at least AME1, CHL4, CNN1, CTF3, CTF19, IML3, MCM16, MCM21, MCM22, MHF1, MHF2, MIF2, NKP1, NKP2, OKP1 and WIP1.

Functionally, dsDNA-binding component of a FANCM-MHF complex involved in DNA damage repair and genome maintenance. FANCM-MHF promotes gene conversion at blocked replication forks, probably by reversal of the stalled fork. Component of the kinetochore, a multiprotein complex that assembles on centromeric DNA and attaches chromosomes to spindle microtubules, mediating chromosome segregation and sister chromatid segregation during meiosis and mitosis. Component of the inner kinetochore constitutive centromere-associated network (CCAN), which serves as a structural platform for outer kinetochore assembly. The chain is Inner kinetochore subunit MHF1 from Saccharomyces cerevisiae (strain ATCC 204508 / S288c) (Baker's yeast).